A 125-amino-acid polypeptide reads, in one-letter code: MSRRRPLIEPATVQVLAIAFTDSFSVSLHWPQREQGCRTAILAPMRRWCDGDVDGRKLLPPARRTGTQQRRIRPAAPRVYTTGDILRDRKGIAPWQEQREPGWAPFGWLHEPSGARCPKADGQSV.

This is an uncharacterized protein from Mycobacterium bovis (strain ATCC BAA-935 / AF2122/97).